The following is a 329-amino-acid chain: Olfactory receptor 10J3 (329 aa).

Residues 1-26 (MPKLNSTFVTEFLFEGFSSFRRQHKL) lie on the Extracellular side of the membrane. N-linked (GlcNAc...) asparagine glycosylation is present at Asn5. The helical transmembrane segment at 27–47 (VFFVVFLTLYLLTLSGNVIIM) threads the bilayer. Over 48–55 (TIIRLDHH) the chain is Cytoplasmic. A helical transmembrane segment spans residues 56-76 (LHTPMYFFLCMLSISETCYTV). Residues 77-100 (AIIPHMLSGLLNPHQPIATQSCAT) are Extracellular-facing. Cys98 and Cys190 are oxidised to a cystine. Residues 101–121 (QLFFYLTFGINNCFLLTVMGY) traverse the membrane as a helical segment. Residues 122–140 (DRYVAICNPLRYSVIMGKR) lie on the Cytoplasmic side of the membrane. Residues 141–161 (ACIQLASGSLGIGLGMAIVQV) form a helical membrane-spanning segment. The Extracellular portion of the chain corresponds to 162–198 (TSVFGLPFCDAFVISHFFCDVRHLLKLACTDTTVNEI). Residues 199–218 (INFVVSVCVLVLPMGLVFIS) form a helical membrane-spanning segment. Residues 219 to 238 (YVLIISTILKIASAEGQKKA) lie on the Cytoplasmic side of the membrane. The helical transmembrane segment at 239–259 (FATCASHLTVVIIHYGCASII) threads the bilayer. Over 260–272 (YLKPKSQSSLGQD) the chain is Extracellular. Residues 273–293 (RLISVTYTHHSPTEPCCVQPE) traverse the membrane as a helical segment. Residues 294-329 (EQGGQRCSAQSRGAKNSVSLMKRGCEGFSFAFINMY) lie on the Cytoplasmic side of the membrane.

The protein belongs to the G-protein coupled receptor 1 family.

It is found in the cell membrane. Its function is as follows. Odorant receptor. The chain is Olfactory receptor 10J3 (OR10J3) from Homo sapiens (Human).